Here is a 214-residue protein sequence, read N- to C-terminus: 3-isopropylmalate dehydratase small subunit (214 aa).

Belongs to the LeuD family. LeuD type 1 subfamily. As to quaternary structure, heterodimer of LeuC and LeuD.

The enzyme catalyses (2R,3S)-3-isopropylmalate = (2S)-2-isopropylmalate. It functions in the pathway amino-acid biosynthesis; L-leucine biosynthesis; L-leucine from 3-methyl-2-oxobutanoate: step 2/4. Functionally, catalyzes the isomerization between 2-isopropylmalate and 3-isopropylmalate, via the formation of 2-isopropylmaleate. The chain is 3-isopropylmalate dehydratase small subunit from Methylobacillus flagellatus (strain ATCC 51484 / DSM 6875 / VKM B-1610 / KT).